A 247-amino-acid polypeptide reads, in one-letter code: Small ribosomal subunit protein uS2 (247 aa).

This sequence belongs to the universal ribosomal protein uS2 family.

The protein is Small ribosomal subunit protein uS2 of Fusobacterium nucleatum subsp. nucleatum (strain ATCC 25586 / DSM 15643 / BCRC 10681 / CIP 101130 / JCM 8532 / KCTC 2640 / LMG 13131 / VPI 4355).